The following is a 311-amino-acid chain: tRNA-cytidine(32) 2-sulfurtransferase (311 aa).

The short motif at 47–52 (SGGKDS) is the PP-loop motif element. 3 residues coordinate [4Fe-4S] cluster: cysteine 122, cysteine 125, and cysteine 213.

It belongs to the TtcA family. In terms of assembly, homodimer. Requires Mg(2+) as cofactor. It depends on [4Fe-4S] cluster as a cofactor.

Its subcellular location is the cytoplasm. It carries out the reaction cytidine(32) in tRNA + S-sulfanyl-L-cysteinyl-[cysteine desulfurase] + AH2 + ATP = 2-thiocytidine(32) in tRNA + L-cysteinyl-[cysteine desulfurase] + A + AMP + diphosphate + H(+). Its pathway is tRNA modification. Functionally, catalyzes the ATP-dependent 2-thiolation of cytidine in position 32 of tRNA, to form 2-thiocytidine (s(2)C32). The sulfur atoms are provided by the cysteine/cysteine desulfurase (IscS) system. The polypeptide is tRNA-cytidine(32) 2-sulfurtransferase (Escherichia coli O127:H6 (strain E2348/69 / EPEC)).